The following is a 277-amino-acid chain: Diaminopimelate epimerase (277 aa).

Residues asparagine 11 and asparagine 62 each coordinate substrate. The Proton donor role is filled by cysteine 71. Substrate contacts are provided by residues 72–73 (GN), asparagine 160, asparagine 193, and 211–212 (ER). Catalysis depends on cysteine 220, which acts as the Proton acceptor. Residue 221–222 (GT) participates in substrate binding.

It belongs to the diaminopimelate epimerase family. Homodimer.

Its subcellular location is the cytoplasm. It carries out the reaction (2S,6S)-2,6-diaminopimelate = meso-2,6-diaminopimelate. Its pathway is amino-acid biosynthesis; L-lysine biosynthesis via DAP pathway; DL-2,6-diaminopimelate from LL-2,6-diaminopimelate: step 1/1. Its function is as follows. Catalyzes the stereoinversion of LL-2,6-diaminopimelate (L,L-DAP) to meso-diaminopimelate (meso-DAP), a precursor of L-lysine. The protein is Diaminopimelate epimerase of Methanococcus maripaludis (strain C6 / ATCC BAA-1332).